A 420-amino-acid polypeptide reads, in one-letter code: UDP-N-acetylglucosamine 1-carboxyvinyltransferase (420 aa).

22 to 23 (KN) is a phosphoenolpyruvate binding site. UDP-N-acetyl-alpha-D-glucosamine is bound at residue R93. C117 acts as the Proton donor in catalysis. At C117 the chain carries 2-(S-cysteinyl)pyruvic acid O-phosphothioketal. Positions 307 and 329 each coordinate UDP-N-acetyl-alpha-D-glucosamine.

The protein belongs to the EPSP synthase family. MurA subfamily.

Its subcellular location is the cytoplasm. The catalysed reaction is phosphoenolpyruvate + UDP-N-acetyl-alpha-D-glucosamine = UDP-N-acetyl-3-O-(1-carboxyvinyl)-alpha-D-glucosamine + phosphate. The protein operates within cell wall biogenesis; peptidoglycan biosynthesis. Functionally, cell wall formation. Adds enolpyruvyl to UDP-N-acetylglucosamine. This Alteromonas mediterranea (strain DSM 17117 / CIP 110805 / LMG 28347 / Deep ecotype) protein is UDP-N-acetylglucosamine 1-carboxyvinyltransferase.